Consider the following 92-residue polypeptide: Small ribosomal subunit protein uS19c (92 aa).

It belongs to the universal ribosomal protein uS19 family.

It is found in the plastid. It localises to the chloroplast. Functionally, protein S19 forms a complex with S13 that binds strongly to the 16S ribosomal RNA. This is Small ribosomal subunit protein uS19c from Illicium oligandrum (Star anise).